The primary structure comprises 139 residues: MLMPKRVQYRKTQRGRMKGNAQRGTAVTFGSFGLKAMEPAWITSRQIEAARIAMNRYMKRDGKIWIRIFPDKPVSKKPAETRMGSGKGSPEFWVAVVKPGRVMFEADGVPREVAVEAFRLAAKKLPIKTKFIVRPDYEG.

The segment at 1–21 (MLMPKRVQYRKTQRGRMKGNA) is disordered. The segment covering 7-17 (VQYRKTQRGRM) has biased composition (basic residues).

The protein belongs to the universal ribosomal protein uL16 family. Part of the 50S ribosomal subunit.

Functionally, binds 23S rRNA and is also seen to make contacts with the A and possibly P site tRNAs. This chain is Large ribosomal subunit protein uL16, found in Chlorobaculum tepidum (strain ATCC 49652 / DSM 12025 / NBRC 103806 / TLS) (Chlorobium tepidum).